We begin with the raw amino-acid sequence, 271 residues long: MNEKTESEIFEEQNSLYKPIKQEKKTPSTPESEDKNDQSLANANQSLEAEPPYLSTGIGYLDDKIKNRSITAFDYYMAKKFLGLDLSVNLNGNLNIKSENKTRLASINKATQDIFDDLKALDLGDDLIKKAQEHSGITNQVKLWLNYKTGGLKGVDYDLAKTDNARLSYANRVAKTMAQGGQVTQKLRDEAKALTSWGFRSKEENTARATQTQEILLNSLRKNLQMLESLGGSVSPLMLEKLKEHQGKINYINDTGGKIDLKKYQSLAGGN.

A disordered region spans residues 1 to 39 (MNEKTESEIFEEQNSLYKPIKQEKKTPSTPESEDKNDQS). Residues 20-37 (IKQEKKTPSTPESEDKND) show a composition bias toward basic and acidic residues. Residues 208–228 (RATQTQEILLNSLRKNLQMLE) adopt a coiled-coil conformation.

This chain is Coiled-coil domain-containing protein ORF29, found in Helicobacter pylori (strain 35A).